A 164-amino-acid polypeptide reads, in one-letter code: Transcriptional regulator MraZ (164 aa).

SpoVT-AbrB domains follow at residues 7–63 (REQH…EPAV) and 92–135 (LDQL…NPDR).

This sequence belongs to the MraZ family. In terms of assembly, forms oligomers.

It is found in the cytoplasm. Its subcellular location is the nucleoid. In Chlorobaculum parvum (strain DSM 263 / NCIMB 8327) (Chlorobium vibrioforme subsp. thiosulfatophilum), this protein is Transcriptional regulator MraZ.